The chain runs to 119 residues: Fluoride-specific ion channel FluC 2 (119 aa).

A helical transmembrane segment spans residues 46-66 (FALGLLTFAGVTGDAALLVGV). The Na(+) site is built by Gly-70 and Thr-73. A helical membrane pass occupies residues 96–116 (LNAVGNLACALVGIGLAWGIV).

The protein belongs to the fluoride channel Fluc/FEX (TC 1.A.43) family.

The protein localises to the cell membrane. It catalyses the reaction fluoride(in) = fluoride(out). With respect to regulation, na(+) is not transported, but it plays an essential structural role and its presence is essential for fluoride channel function. Fluoride-specific ion channel. Important for reducing fluoride concentration in the cell, thus reducing its toxicity. The polypeptide is Fluoride-specific ion channel FluC 2 (Haloarcula marismortui (strain ATCC 43049 / DSM 3752 / JCM 8966 / VKM B-1809) (Halobacterium marismortui)).